A 419-amino-acid polypeptide reads, in one-letter code: MAQEVIKIRGGQALKGEVEISGAKNSAVAIIPATLLAQGQVKLEGLPQISDVETLVSLLEDLNIEARLNGKQLEVDTTQIENAPLPNNKVESLRASYYMMGAMLGRFKKCVIGLPGGCPLGPRPIDQHIKGFKALGAEIDESSNTSMKLVAKELRGAHIFLDMVSVGATINIMLAAVHAKGQTVIDNAAKEPEVVDVANFLMSMGADIRGAGTTSIKINGVEELKGSEYQIIPDRIEAGSYMCMAAAMGEEVILHNIVPKHVEALTVKLQELGVDIEIEDEKIIIRKQTPYKNVDIKTLVYPGFATDLQQPITPLLFMTEGPSFVTDTIYPARFKHVEELQCMGANIKSDEGTAVIKPSTLNGAEVYASDLRAGACLITAGLIAEGVTTIFNVKHIYRGYTNIVEHLKALGADIWTETV.

Phosphoenolpyruvate is bound at residue 24–25 (KN). Residue arginine 94 coordinates UDP-N-acetyl-alpha-D-glucosamine. The Proton donor role is filled by cysteine 118. Residue cysteine 118 is modified to 2-(S-cysteinyl)pyruvic acid O-phosphothioketal. UDP-N-acetyl-alpha-D-glucosamine-binding positions include 123-127 (RPIDQ), aspartate 307, and isoleucine 329.

The protein belongs to the EPSP synthase family. MurA subfamily.

The protein resides in the cytoplasm. It catalyses the reaction phosphoenolpyruvate + UDP-N-acetyl-alpha-D-glucosamine = UDP-N-acetyl-3-O-(1-carboxyvinyl)-alpha-D-glucosamine + phosphate. It functions in the pathway cell wall biogenesis; peptidoglycan biosynthesis. In terms of biological role, cell wall formation. Adds enolpyruvyl to UDP-N-acetylglucosamine. The polypeptide is UDP-N-acetylglucosamine 1-carboxyvinyltransferase 2 (Staphylococcus epidermidis (strain ATCC 12228 / FDA PCI 1200)).